A 380-amino-acid polypeptide reads, in one-letter code: Cytochrome b (380 aa).

Helical transmembrane passes span 34 to 54, 78 to 99, 114 to 134, and 179 to 199; these read FGSLLGTCLATQIITGLLLAM, WLIRNLHANGASFFFICIYLHI, WNTGVVLLLTLMATAFVGYVL, and FFALHFLLPFLIAGLTLIHLT. Heme b-binding residues include His-84 and His-98. Residues His-183 and His-197 each coordinate heme b. Residue His-202 participates in a ubiquinone binding. Transmembrane regions (helical) follow at residues 227-247, 289-309, 321-341, and 348-368; these read TKDLLGFIIMLTPLMTLALFS, LGGVLALTASVLVLFLSPFLH, LSQILFWTLVANLLILTWVGS, and FIIIGQLASLTYFTILLILFP.

It belongs to the cytochrome b family. In terms of assembly, the cytochrome bc1 complex contains 11 subunits: 3 respiratory subunits (MT-CYB, CYC1 and UQCRFS1), 2 core proteins (UQCRC1 and UQCRC2) and 6 low-molecular weight proteins (UQCRH/QCR6, UQCRB/QCR7, UQCRQ/QCR8, UQCR10/QCR9, UQCR11/QCR10 and a cleavage product of UQCRFS1). This cytochrome bc1 complex then forms a dimer. It depends on heme b as a cofactor.

It is found in the mitochondrion inner membrane. Component of the ubiquinol-cytochrome c reductase complex (complex III or cytochrome b-c1 complex) that is part of the mitochondrial respiratory chain. The b-c1 complex mediates electron transfer from ubiquinol to cytochrome c. Contributes to the generation of a proton gradient across the mitochondrial membrane that is then used for ATP synthesis. This is Cytochrome b (MT-CYB) from Aerodramus vulcanorum (Volcano swiftlet).